A 623-amino-acid polypeptide reads, in one-letter code: Chaperone protein HtpG (623 aa).

An a; substrate-binding region spans residues 1-336; sequence MSETNTQKAA…TEDLPLNVSR (336 aa). The interval 337–546 is b; that stretch reads EMLQATPVLA…DGGPDLTMQR (210 aa). A c region spans residues 547 to 623; that stretch reads LMRRSGQAMP…ATLLAGPAAE (77 aa).

The protein belongs to the heat shock protein 90 family. In terms of assembly, homodimer.

The protein localises to the cytoplasm. In terms of biological role, molecular chaperone. Has ATPase activity. This Gluconobacter oxydans (strain 621H) (Gluconobacter suboxydans) protein is Chaperone protein HtpG.